A 339-amino-acid polypeptide reads, in one-letter code: MPSPLILCRYLPRELSPTVDSRSCSSPLVASRAGKFLGATPPRAPRLSRRLAWCFIDWGQVCLLHRLGSGGFGSVYKATYHGVPVAIKQVNKCTRTLRASQRNFWAELNIARLHHDNIIRVVAASTRTPEGSNSLGTIIMEFGGNVTLHQVIYGATRSPEPLSCREQLSLGKCLKYSLDIVNGLLFLHSQSILHLDLKPANILISEKDVCKISDFGCSQKLQDLRCRPSLHHIGGTYTHQAPELLKGEIATPKADIYSFGITLWQMTTREVPYSGEPQYVQYAVVAYNLRPHWQAVFTASLTGKTLQNNVQSCWEARALQRPGAELLQKDLKAFRGALG.

One can recognise a Protein kinase domain in the interval 61–335 (VCLLHRLGSG…LLQKDLKAFR (275 aa)). ATP-binding positions include 67-75 (LGSGGFGSV) and K88. The active-site Proton acceptor is D196.

It belongs to the protein kinase superfamily. Ser/Thr protein kinase family. Interacts with MAP2K1/MEK1. Expressed mainly in gonadal tissues, and cardiac and skeletal muscles.

It is found in the cytoplasm. The enzyme catalyses L-seryl-[protein] + ATP = O-phospho-L-seryl-[protein] + ADP + H(+). The catalysed reaction is L-threonyl-[protein] + ATP = O-phospho-L-threonyl-[protein] + ADP + H(+). In terms of biological role, serine/threonine kinase involved in the regulation of MAPK signaling. Is an activator of the ERK1/2 signaling cascade playing an essential role in the stimulation of oocyte maturation. The sequence is that of Proto-oncogene serine/threonine-protein kinase mos from Rattus norvegicus (Rat).